Reading from the N-terminus, the 342-residue chain is Anthranilate phosphoribosyltransferase (342 aa).

Residues Gly81, 84–85 (GD), 91–94 (NVSS), 109–117 (KHGNRGVSS), and Ser121 contribute to the 5-phospho-alpha-D-ribose 1-diphosphate site. Gly81 contacts anthranilate. Ser93 provides a ligand contact to Mg(2+). Asn112 lines the anthranilate pocket. Arg167 is an anthranilate binding site. Asp226 and Glu227 together coordinate Mg(2+).

Belongs to the anthranilate phosphoribosyltransferase family. In terms of assembly, homodimer. Mg(2+) serves as cofactor.

It carries out the reaction N-(5-phospho-beta-D-ribosyl)anthranilate + diphosphate = 5-phospho-alpha-D-ribose 1-diphosphate + anthranilate. It functions in the pathway amino-acid biosynthesis; L-tryptophan biosynthesis; L-tryptophan from chorismate: step 2/5. Functionally, catalyzes the transfer of the phosphoribosyl group of 5-phosphorylribose-1-pyrophosphate (PRPP) to anthranilate to yield N-(5'-phosphoribosyl)-anthranilate (PRA). This Marinobacter nauticus (strain ATCC 700491 / DSM 11845 / VT8) (Marinobacter aquaeolei) protein is Anthranilate phosphoribosyltransferase.